The primary structure comprises 95 residues: Large ribosomal subunit protein bL25 (95 aa).

Belongs to the bacterial ribosomal protein bL25 family. As to quaternary structure, part of the 50S ribosomal subunit; part of the 5S rRNA/L5/L18/L25 subcomplex. Contacts the 5S rRNA. Binds to the 5S rRNA independently of L5 and L18.

In terms of biological role, this is one of the proteins that binds to the 5S RNA in the ribosome where it forms part of the central protuberance. This chain is Large ribosomal subunit protein bL25, found in Shewanella baltica (strain OS223).